We begin with the raw amino-acid sequence, 388 residues long: Homoserine O-acetyltransferase (388 aa).

Residues Pro-55–Glu-354 form the AB hydrolase-1 domain. Ser-150 functions as the Nucleophile in the catalytic mechanism. Arg-220 is a substrate binding site. Active-site residues include Asp-318 and His-348. Asp-349 is a substrate binding site.

The protein belongs to the AB hydrolase superfamily. MetX family. In terms of assembly, homodimer.

It is found in the cytoplasm. It catalyses the reaction L-homoserine + acetyl-CoA = O-acetyl-L-homoserine + CoA. Its pathway is amino-acid biosynthesis; L-methionine biosynthesis via de novo pathway; O-acetyl-L-homoserine from L-homoserine: step 1/1. In terms of biological role, transfers an acetyl group from acetyl-CoA to L-homoserine, forming acetyl-L-homoserine. This chain is Homoserine O-acetyltransferase, found in Corynebacterium urealyticum (strain ATCC 43042 / DSM 7109).